The primary structure comprises 126 residues: Small ribosomal subunit protein uS13 (126 aa).

Residues 92 to 126 (HRRGLPVRGQRTKTNARTRKGPKRTVAGKKKAGRK) form a disordered region.

It belongs to the universal ribosomal protein uS13 family. Part of the 30S ribosomal subunit. Forms a loose heterodimer with protein S19. Forms two bridges to the 50S subunit in the 70S ribosome.

Functionally, located at the top of the head of the 30S subunit, it contacts several helices of the 16S rRNA. In the 70S ribosome it contacts the 23S rRNA (bridge B1a) and protein L5 of the 50S subunit (bridge B1b), connecting the 2 subunits; these bridges are implicated in subunit movement. Contacts the tRNAs in the A and P-sites. The sequence is that of Small ribosomal subunit protein uS13 from Kineococcus radiotolerans (strain ATCC BAA-149 / DSM 14245 / SRS30216).